Here is a 596-residue protein sequence, read N- to C-terminus: Elongation factor 4 (596 aa).

Positions 2-184 (KHIRNFSIIA…VIVEQIPPPE (183 aa)) constitute a tr-type G domain. GTP is bound by residues 14-19 (DHGKST) and 131-134 (NKID).

It belongs to the TRAFAC class translation factor GTPase superfamily. Classic translation factor GTPase family. LepA subfamily.

The protein resides in the cell inner membrane. It carries out the reaction GTP + H2O = GDP + phosphate + H(+). Required for accurate and efficient protein synthesis under certain stress conditions. May act as a fidelity factor of the translation reaction, by catalyzing a one-codon backward translocation of tRNAs on improperly translocated ribosomes. Back-translocation proceeds from a post-translocation (POST) complex to a pre-translocation (PRE) complex, thus giving elongation factor G a second chance to translocate the tRNAs correctly. Binds to ribosomes in a GTP-dependent manner. The protein is Elongation factor 4 of Shewanella piezotolerans (strain WP3 / JCM 13877).